The sequence spans 121 residues: Large ribosomal subunit protein eL31 (121 aa).

Belongs to the eukaryotic ribosomal protein eL31 family.

The sequence is that of Large ribosomal subunit protein eL31 (RPL31) from Panax ginseng (Korean ginseng).